Here is a 509-residue protein sequence, read N- to C-terminus: Cobyric acid synthase (509 aa).

Residues 262–459 enclose the GATase cobBQ-type domain; sequence EIKVGIIKLP…IHGIFENDIW (198 aa). The active-site Nucleophile is the Cys343. His451 is a catalytic residue.

This sequence belongs to the CobB/CobQ family. CobQ subfamily.

Its pathway is cofactor biosynthesis; adenosylcobalamin biosynthesis. Functionally, catalyzes amidations at positions B, D, E, and G on adenosylcobyrinic A,C-diamide. NH(2) groups are provided by glutamine, and one molecule of ATP is hydrogenolyzed for each amidation. The polypeptide is Cobyric acid synthase (Prochlorococcus marinus (strain MIT 9312)).